The following is an 813-amino-acid chain: Ribonuclease R (813 aa).

The 328-residue stretch at 260–587 (RVDLRDLPLV…LHRAIKYLLA (328 aa)) folds into the RNB domain. K544 is subject to N6-acetyllysine; by PatZ. Residues 644–725 (GNVFKGVISS…DERKIDFSLI (82 aa)) enclose the S1 motif domain. Residues 731–813 (PRNVGKTARE…KRAAKKKVAE (83 aa)) are disordered. 2 stretches are compositionally biased toward basic and acidic residues: residues 737–749 (TARE…DAGK) and 761–774 (VNFE…GEKK). Basic residues predominate over residues 775–791 (TKPKAAKKDARKAKKPS). The segment covering 792–801 (AKTQKIAAAT) has biased composition (low complexity). Residues 802–813 (KAKRAAKKKVAE) show a composition bias toward basic residues.

The protein belongs to the RNR ribonuclease family. RNase R subfamily. Monomer. Mg(2+) serves as cofactor. Acetylated at Lys-544 by PatZ during exponential growth phase. Acetylation alters RNase R structure and enhances binding of SsrA/tmRNA and SmpB, leading to instability and degradation of RNase R. Not acetylated and stable in stationary phase cells.

It is found in the cytoplasm. The enzyme catalyses Exonucleolytic cleavage in the 3'- to 5'-direction to yield nucleoside 5'-phosphates.. Stimulated by the presence of a monovalent cation. Highly unstable in exponential growth phase. This instability is due to the binding of SsrA/tmRNA and its associated protein SmpB to the C-terminal region of RNase R. In contrast, RNase R becomes stabilized upon entry into stationary phase. The difference in stability between exponential and stationary phase is due to the acetylation of a single lysine residue. Functionally, 3'-5' exoribonuclease that releases 5'-nucleoside monophosphates and is involved in maturation of structured RNAs (rRNAs, tRNAs and SsrA/tmRNA). In stationary phase, involved in the post-transcriptional regulation of ompA mRNA stability. Shortens RNA processively to di- and trinucleotides. In vitro, exhibits helicase activity, which is independent of its RNase activity. RNases 2 and R (rnb and this entry) contribute to rRNA degradation during starvation, while RNase R and PNPase (this entry and pnp) are the major contributors to quality control of rRNA during steady state growth. Required for the expression of virulence genes in enteroinvasive strains of E.coli. In Escherichia coli (strain K12), this protein is Ribonuclease R (rnr).